We begin with the raw amino-acid sequence, 1226 residues long: Arf guanine nucleotide exchange factor SYT1 (1226 aa).

Disordered regions lie at residues 17 to 39 and 113 to 158; these read HSNDKNGNKKGGSNVSTGIDKLR and RNGQ…RNSK. The segment covering 131–142 has biased composition (basic and acidic residues); sequence SIEKVPKPDGER. Residue T277 is modified to Phosphothreonine. Disordered stretches follow at residues 311–405, 954–1022, and 1178–1198; these read NSLM…TGMS, STGS…NEDY, and LEHGKGEEEGQGNNDDSDGID. Polar residues predominate over residues 349–360; sequence LSRSRSQSTSFV. S369 is subject to Phosphoserine. Residues 386–405 show a composition bias toward polar residues; it reads GPTSVYNNKSNANSTITGMS. The 216-residue stretch at 405 to 620 folds into the SEC7 domain; it reads SRRSSSIVNA…TYFYENVTAK (216 aa). The PH domain maps to 844-1074; sequence ILQMGAIMNL…DSINLFSAYD (231 aa). Low complexity-rich tracts occupy residues 956 to 969 and 994 to 1017; these read GSHTSNTTAASSSA and SSVSNGESDNDSVSSSDNQLSSND.

It is found in the cytoplasm. With respect to regulation, inhibited by brefeldin A. Functionally, guanine nucleotide exchange factor for Arf GTPases, stimulating the nucleotide exchange from the GDP-bound to the GTP-bound form. Catalyzes both the GDP release by and the GTP binding to ARF2. Has no exchange activity on Rab GTPases. Involved in vesicular transport. The sequence is that of Arf guanine nucleotide exchange factor SYT1 (SYT1) from Saccharomyces cerevisiae (strain ATCC 204508 / S288c) (Baker's yeast).